Reading from the N-terminus, the 223-residue chain is Agamous-like MADS-box protein AGL11 (223 aa).

The 61-residue stretch at 1 to 61 (MGRGKIEIKR…GRVYEYSNNN (61 aa)) folds into the MADS-box domain. One can recognise a K-box domain in the interval 87–177 (AQYYQQESAK…RTKIAEVERL (91 aa)).

Its subcellular location is the nucleus. Probable transcription factor involved in seed development. The protein is Agamous-like MADS-box protein AGL11 of Vitis vinifera (Grape).